A 304-amino-acid polypeptide reads, in one-letter code: UDP-3-O-acyl-N-acetylglucosamine deacetylase (304 aa).

Residues H78, H237, and D241 each contribute to the Zn(2+) site. H264 (proton donor) is an active-site residue.

This sequence belongs to the LpxC family. Zn(2+) serves as cofactor.

The catalysed reaction is a UDP-3-O-[(3R)-3-hydroxyacyl]-N-acetyl-alpha-D-glucosamine + H2O = a UDP-3-O-[(3R)-3-hydroxyacyl]-alpha-D-glucosamine + acetate. It functions in the pathway glycolipid biosynthesis; lipid IV(A) biosynthesis; lipid IV(A) from (3R)-3-hydroxytetradecanoyl-[acyl-carrier-protein] and UDP-N-acetyl-alpha-D-glucosamine: step 2/6. Functionally, catalyzes the hydrolysis of UDP-3-O-myristoyl-N-acetylglucosamine to form UDP-3-O-myristoylglucosamine and acetate, the committed step in lipid A biosynthesis. This Legionella pneumophila (strain Paris) protein is UDP-3-O-acyl-N-acetylglucosamine deacetylase.